A 742-amino-acid chain; its full sequence is Collectin-12 (742 aa).

Topologically, residues 1 to 37 are cytoplasmic; that stretch reads MKDDFAEEEEVQSFGYKRFGIQEGTQCTKCKNNWALK. Residues 38–58 traverse the membrane as a helical; Signal-anchor for type II membrane protein segment; that stretch reads FSIILLYILCVLLTITIAILG. The Extracellular segment spans residues 59–742; sequence YKVVEKMDNV…DMDKEQIFGV (684 aa). Coiled-coil stretches lie at residues 71-101 and 271-334; these read GLETSHRRYTEKLTEVESDLKKLDDQAGQKA and NNSA…QLEE. The interval 439 to 605 is disordered; that stretch reads TILQGPPGPR…SEPTSVPEAN (167 aa). Collagen-like domains follow at residues 467–526 and 527–586; these read GQKG…SGDP and GPPG…PGPP. The span at 475 to 492 shows a compositional bias: pro residues; that stretch reads PGPPGPAGEKGPPGPIGP. Low complexity-rich tracts occupy residues 502-522 and 532-556; these read RGSPGSKGQRGSPGKTGLPGP and QGKDGPQGPQGPPGFQGLQGTVGEP. Residues 571 to 589 show a composition bias toward pro residues; it reads PGLPGPKGPPGPPGPPGPG. Intrachain disulfides connect Cys-607–Cys-618, Cys-635–Cys-730, and Cys-708–Cys-722. Positions 614 to 731 constitute a C-type lectin domain; sequence YTEKCYYFSI…CEDVNNFICE (118 aa). The Ca(2+) site is built by Ile-644, Asn-646, Glu-650, Asp-670, and Glu-674. The a carbohydrate site is built by Lys-691, Gln-694, and Asp-696. The Ca(2+) site is built by Gln-694, Asp-696, Asn-697, Glu-706, Asp-707, Asn-718, Asp-719, and Glu-731. Glu-706 contributes to the a carbohydrate binding site. Residues Asn-718 and Asp-719 each coordinate a carbohydrate.

Widely expressed.

The protein localises to the membrane. Functionally, scavenger receptor that displays several functions associated with host defense. Binds to carbohydrates. This Gallus gallus (Chicken) protein is Collectin-12 (COLEC12).